Consider the following 3080-residue polypeptide: Adhesion G-protein coupled receptor G4 (3080 aa).

An N-terminal signal peptide occupies residues 1–27 (MKEHIIYQKLYGLILMSSFIFLSDTLS). Topologically, residues 28 to 2740 (LKGKKLDFFG…SRSTVDSVNE (2713 aa)) are extracellular. Positions 29-228 (KGKKLDFFGR…IPTVDRTLRC (200 aa)) constitute a Pentraxin (PTX) domain. 2 disulfides stabilise this stretch: Cys-58–Cys-123 and Cys-200–Cys-228. Asp-202 serves as a coordination point for Mg(2+). Residues Asn-233, Asn-487, Asn-836, and Asn-899 are each glycosylated (N-linked (GlcNAc...) asparagine). Polar residues predominate over residues 946 to 959 (SEGISAGSPTSGST). Residues 946–965 (SEGISAGSPTSGSTHIFGEP) form a disordered region. Residue Asn-1020 is glycosylated (N-linked (GlcNAc...) asparagine). The tract at residues 1274–1348 (VTEMSPSKNS…ITPTLTSSNT (75 aa)) is disordered. 3 stretches are compositionally biased toward polar residues: residues 1277–1296 (MSPS…SLEM), 1305–1315 (TKISSHQTHSP), and 1324–1348 (SDGN…SSNT). A glycan (N-linked (GlcNAc...) asparagine) is linked at Asn-1519. The segment covering 2109 to 2139 (SRTTITANPRTVSHPSSFSRKTMSPSTTDHT) has biased composition (polar residues). The disordered stretch occupies residues 2109–2141 (SRTTITANPRTVSHPSSFSRKTMSPSTTDHTLS). Residues Asn-2361 and Asn-2640 are each glycosylated (N-linked (GlcNAc...) asparagine). A GAIN-B domain is found at 2578–2734 (MAFSIHSYEE…GVLMDLSRST (157 aa)). Cystine bridges form between Cys-2685-Cys-2716 and Cys-2704-Cys-2718. Positions 2685–2734 (CAFWDFENNNGLGGWNSSGCKVKETNVNYTICQCDHLTHFGVLMDLSRST) are GPS. A stachel region spans residues 2723-2734 (HFGVLMDLSRST). A helical transmembrane segment spans residues 2741 to 2766 (QILALITYTGCGISSIFLGVAVVTYI). The Cytoplasmic portion of the chain corresponds to 2767–2777 (AFHKLRKDYPA). Residues 2778–2800 (KILINLCTALLMLNLVFLINSWL) traverse the membrane as a helical segment. The Extracellular segment spans residues 2801 to 2806 (SSFQKV). The helical transmembrane segment at 2807-2835 (GVCITAAVALHYFLLVSFTWMGLEAVHMY) threads the bilayer. Residues Cys-2809 and Cys-2886 are joined by a disulfide bond. Residues 2836-2849 (LALVKVFNIYIPNY) are Cytoplasmic-facing. Residues 2850–2870 (ILKFCLVGWGIPAIMVAITVS) traverse the membrane as a helical segment. The Extracellular segment spans residues 2871-2892 (VKKDLYGTLSPTTPFCWIKDDS). A helical transmembrane segment spans residues 2893 to 2918 (IFYISVVAYFCLIFLMNLSMFCTVLV). Over 2919–2937 (QLNSVKSQIQKTRRKMILH) the chain is Cytoplasmic. A helical membrane pass occupies residues 2938–2961 (DLKGTMSLTFLLGLTWGFAFFAWG). Over 2962–2965 (PMRN) the chain is Extracellular. Residues 2966–2989 (FFLYLFAIFNTLQGFFIFVFHCVM) traverse the membrane as a helical segment. Residues 2990–3080 (KESVREQWQI…FDKDPYCSSP (91 aa)) lie on the Cytoplasmic side of the membrane. Over residues 3051–3065 (FKSLGSAQGTPSEIS) the composition is skewed to polar residues. A disordered region spans residues 3051 to 3080 (FKSLGSAQGTPSEISFPNDDFDKDPYCSSP).

It belongs to the G-protein coupled receptor 2 family. Adhesion G-protein coupled receptor (ADGR) subfamily. Homodimer; homodimerizes via its Pentraxin domain in a calcium-independent manner. Heterodimer of 2 chains generated by proteolytic processing; the large extracellular N-terminal fragment and the membrane-bound C-terminal fragment predominantly remain associated and non-covalently linked. In terms of processing, autoproteolytically processed at the GPS region of the GAIN-B domain; this cleavage modulates receptor activity. N-glycosylated. In terms of tissue distribution, detected in fetal retina. Highly expressed in normal enterochromaffin cells and in neuroendocrine carcinoma. Detected in normal liver; highly expressed in primary liver carcinoma.

It localises to the membrane. Forms a heterodimer of 2 chains generated by proteolytic processing that remain associated through non-covalent interactions mediated by the GAIN-B domain. In the inactivated receptor, the Stachel sequence (also named stalk) is embedded in the GAIN-B domain, where it adopts a beta-strand conformation. On activation, the Stachel moves into the 7 transmembrane region and adopts a twisted hook-shaped configuration that forms contacts within the receptor, leading to coupling of a G-alpha protein, which activates signaling. The cleaved GAIN-B and N-terminal domains can then dissociate from the rest of the receptor. Its function is as follows. Orphan adhesion G-protein coupled receptor (aGPCR). Ligand binding causes a conformation change that triggers signaling via guanine nucleotide-binding proteins (G proteins) and modulates the activity of downstream effectors, such as adenylate cyclase. ADGRG4 is coupled to G(s) G proteins and mediates activation of adenylate cyclase activity. May be act as sensor of mechanical forces. The polypeptide is Adhesion G-protein coupled receptor G4 (Homo sapiens (Human)).